The following is a 380-amino-acid chain: Protein Wnt-5a (380 aa).

Residues methionine 1–serine 40 form the signal peptide. Cysteine 104 and cysteine 115 are oxidised to a cystine. N-linked (GlcNAc...) asparagine glycosylation is found at asparagine 114 and asparagine 120. 10 cysteine pairs are disulfide-bonded: cysteine 154–cysteine 162, cysteine 164–cysteine 182, cysteine 238–cysteine 252, cysteine 240–cysteine 247, cysteine 309–cysteine 340, cysteine 325–cysteine 335, cysteine 339–cysteine 379, cysteine 355–cysteine 370, cysteine 357–cysteine 367, and cysteine 362–cysteine 363. Serine 244 is lipidated: O-palmitoleoyl serine; by PORCN. Residues asparagine 312 and asparagine 326 are each glycosylated (N-linked (GlcNAc...) asparagine).

The protein belongs to the Wnt family. Palmitoleoylation is required for efficient binding to frizzled receptors. Depalmitoleoylation leads to Wnt signaling pathway inhibition. As to expression, found primarily in ectoderm with lower levels of expression in mesoderm. Detected in the head and tail with lower expression in the middle of the embryo. No expression was found in the notochord.

It is found in the secreted. Its subcellular location is the extracellular space. It localises to the extracellular matrix. Ligand for members of the frizzled family of seven transmembrane receptors. Can activate or inhibit canonical Wnt signaling, depending on receptor context. Plays a role in normal embryonic development. The chain is Protein Wnt-5a (wnt5a) from Xenopus laevis (African clawed frog).